Here is a 118-residue protein sequence, read N- to C-terminus: UPF0145 protein PTO0347 (118 aa).

This sequence belongs to the UPF0145 family.

The chain is UPF0145 protein PTO0347 from Picrophilus torridus (strain ATCC 700027 / DSM 9790 / JCM 10055 / NBRC 100828 / KAW 2/3).